The following is an 817-amino-acid chain: Alpha-bisabolene synthase (817 aa).

Residues D566, D570, D713, T717, and E721 each contribute to the Mg(2+) site. The short motif at 566 to 570 (DDMYD) is the DDXXD motif element.

The protein belongs to the terpene synthase family. Tpsd subfamily. Mg(2+) is required as a cofactor. Requires Mn(2+) as cofactor. K(+) serves as cofactor.

The protein localises to the cytoplasm. It carries out the reaction (2E,6E)-farnesyl diphosphate = (E,R)-alpha-bisabolene + diphosphate. It participates in terpene metabolism; oleoresin biosynthesis. Functionally, converts farnesyl diphosphate to alpha-bisabolene. Involved in defensive oleoresin formation in conifers in response to insect attack or other injury. Involved in sesquiterpene (C15) olefins biosynthesis. This is Alpha-bisabolene synthase (ag1) from Abies grandis (Grand fir).